The primary structure comprises 220 residues: Octanoyltransferase (220 aa).

Residues 36–212 (ADSPDQFWLV…CLARQLGRRL (177 aa)) form the BPL/LPL catalytic domain. Substrate-binding positions include 75–82 (RGGQVTYH), 142–144 (SLG), and 155–157 (GVA). Residue Cys173 is the Acyl-thioester intermediate of the active site.

The protein belongs to the LipB family.

The protein localises to the cytoplasm. The catalysed reaction is octanoyl-[ACP] + L-lysyl-[protein] = N(6)-octanoyl-L-lysyl-[protein] + holo-[ACP] + H(+). The protein operates within protein modification; protein lipoylation via endogenous pathway; protein N(6)-(lipoyl)lysine from octanoyl-[acyl-carrier-protein]: step 1/2. In terms of biological role, catalyzes the transfer of endogenously produced octanoic acid from octanoyl-acyl-carrier-protein onto the lipoyl domains of lipoate-dependent enzymes. Lipoyl-ACP can also act as a substrate although octanoyl-ACP is likely to be the physiological substrate. This is Octanoyltransferase from Chromohalobacter salexigens (strain ATCC BAA-138 / DSM 3043 / CIP 106854 / NCIMB 13768 / 1H11).